We begin with the raw amino-acid sequence, 1894 residues long: Adenylate kinase 9 (1894 aa).

Positions 32 to 286 (TCFIIFGKPG…LFMTVIERLK (255 aa)) are adenylate kinase 1. 41–46 (GAGKTT) lines the ATP pocket. An NMP 1 region spans residues 61 to 90 (EALSVLEEHIAAEKETGAMLQSLLVSGHSI). 117–120 (EMPS) contributes to the AMP binding site. Positions 161–206 (GQRQHSTTGYVYTREQWDPEIIESRRRKKRDFPKEGKSEEEEEEEE) are LID 1. Residues 188-211 (KKRDFPKEGKSEEEEEEEEQEEEE) are disordered. The segment covering 198–211 (SEEEEEEEEQEEEE) has biased composition (acidic residues). Arg-230 serves as a coordination point for AMP. Residues 451–478 (IKVVQQRLLNEKQAKQQEERTLKELQVQ) adopt a coiled-coil conformation. The disordered stretch occupies residues 492–533 (SEELPSLENTGSKLSSLEIGQEDKSKSETTITGDQVKDVSTE). Residues 651–691 (LERLQEEAQAKKREEEEIRKVKEEELRLEEEKQRLMELATK) are a coiled coil. 2 disordered regions span residues 710–789 (PYPD…LGSE) and 876–911 (EEEAEDYQAETEIDEEQEEEEEEEEEGEEKIKEKRR). The segment covering 715–736 (PDNEAEEEVEDSEIHEESEAQE) has biased composition (acidic residues). Basic and acidic residues-rich tracts occupy residues 757–768 (EGDHEPEAEFKP) and 777–789 (ETEKDPKEGLGSE). The segment covering 876 to 903 (EEEAEDYQAETEIDEEQEEEEEEEEEGE) has biased composition (acidic residues). The segment at 976–1187 (LRICLLGPHG…VAKRRAELIL (212 aa)) is adenylate kinase 2. 985 to 990 (GSGKTV) is a binding site for ATP. The NMP 2 stretch occupies residues 1005–1036 (QFDEFLQEKMLLKAERKFGPEFEDDSEEEQLV). Residues 1034–1036 (QLV) and 1063–1066 (VQLT) contribute to the AMP site. Residues 1108-1128 (DGFPRHPEEAQFLGERGFFPD) are LID 2. Positions 1223–1241 (EFPKDEEEMSEEDEEQEAD) are enriched in acidic residues. A disordered region spans residues 1223-1243 (EFPKDEEEMSEEDEEQEADAT). The adenylate kinase 3 stretch occupies residues 1395 to 1584 (VRIMIVGPPK…VWNEVLKDIQ (190 aa)). ATP is bound at residue 1404 to 1409 (KSGKTT). The NMP 3 stretch occupies residues 1424–1455 (SVGDALRGMLNNHPDSELSLMLNWHLHKGKTV). AMP is bound by residues Arg-1430, 1482–1485 (GYPV), and Gln-1489. The segment at 1519 to 1533 (LEKKTEQSMSYPLHN) is LID 3.

The protein belongs to the adenylate kinase family. Highly expressed in the testis.

Its subcellular location is the cytoplasm. The protein resides in the nucleus. It localises to the cell projection. It is found in the cilium. The protein localises to the flagellum. It carries out the reaction a ribonucleoside 5'-phosphate + ATP = a ribonucleoside 5'-diphosphate + ADP. The enzyme catalyses AMP + ATP = 2 ADP. It catalyses the reaction GTP + AMP = GDP + ADP. The catalysed reaction is CMP + ATP = CDP + ADP. It carries out the reaction GTP + CMP = CDP + GDP. The enzyme catalyses dAMP + ATP = dADP + ADP. It catalyses the reaction dCMP + ATP = dCDP + ADP. The catalysed reaction is a ribonucleoside 5'-diphosphate + ATP = a ribonucleoside 5'-triphosphate + ADP. It carries out the reaction CDP + ATP = CTP + ADP. The enzyme catalyses CDP + GTP = CTP + GDP. It catalyses the reaction GDP + ATP = GTP + ADP. The catalysed reaction is UDP + ATP = UTP + ADP. It carries out the reaction GTP + UDP = UTP + GDP. The enzyme catalyses dTDP + GTP = dTTP + GDP. It catalyses the reaction dCDP + ATP = dCTP + ADP. The catalysed reaction is dCDP + GTP = dCTP + GDP. It carries out the reaction dGDP + ATP = dGTP + ADP. The enzyme catalyses dTDP + ATP = dTTP + ADP. It catalyses the reaction dADP + GTP = dATP + GDP. Functionally, broad-specificity nucleoside phosphate kinase involved in cellular nucleotide homeostasis by catalyzing nucleoside-phosphate interconversions. Similar to other adenylate kinases, preferentially catalyzes the phosphorylation of the nucleoside monophosphate AMP with ATP as phosphate donor to produce ADP. In vitro, can also catalyze the phosphorylation of CMP, dAMP and dCMP and use GTP as an alternate phosphate donor. Moreover, exhibits a diphosphate kinase activity, producing ATP, CTP, GTP, UTP, TTP, dATP, dCTP and dGTP from the corresponding diphosphate substrates with either ATP or GTP as phosphate donors. For this activity shows the following substrate preference CDP &gt; UDP &gt; ADP &gt; TDP. The chain is Adenylate kinase 9 from Mus musculus (Mouse).